Consider the following 193-residue polypeptide: dTTP/UTP pyrophosphatase (193 aa).

The active-site Proton acceptor is the Asp77.

This sequence belongs to the Maf family. YhdE subfamily. It depends on a divalent metal cation as a cofactor.

It localises to the cytoplasm. The catalysed reaction is dTTP + H2O = dTMP + diphosphate + H(+). It carries out the reaction UTP + H2O = UMP + diphosphate + H(+). In terms of biological role, nucleoside triphosphate pyrophosphatase that hydrolyzes dTTP and UTP. May have a dual role in cell division arrest and in preventing the incorporation of modified nucleotides into cellular nucleic acids. The polypeptide is dTTP/UTP pyrophosphatase (Bacteroides fragilis (strain YCH46)).